The following is a 67-amino-acid chain: VRDGYIAQPENCVYHCFPGSSGCDTLCKEKGGTSGHCGFKVGHGLACWCNALPDNVGIIVEGEKCHS.

One can recognise an LCN-type CS-alpha/beta domain in the interval arginine 2–histidine 66. 4 disulfide bridges follow: cysteine 12–cysteine 65, cysteine 16–cysteine 37, cysteine 23–cysteine 47, and cysteine 27–cysteine 49. Serine 67 carries the serine amide modification.

Belongs to the long (4 C-C) scorpion toxin superfamily. Sodium channel inhibitor family. Alpha subfamily. Monomer. In terms of tissue distribution, expressed by the venom gland.

The protein localises to the secreted. Its function is as follows. Alpha toxins bind voltage-independently at site-3 of sodium channels (Nav) and inhibit the inactivation of the activated channels, thereby blocking neuronal transmission. The dissociation is voltage-dependent. This alpha-like toxin is highly toxic to insects and competes with LqhaIT on binding to insect sodium channels. Differs from classical anti-mammalian alpha-toxins as it inhibits sodium channel inactivation in cell bodies of hippocampus brain neurons, on which the anti-mammalian Lqh2 is inactive, and is unable to affect Nav1.2 in the rat brain, on which Lqh2 is highly active. Moreover, its pharmacological properties are unique in that its binding affinity for insect channels drops &gt;30-fold at pH 8.5 versus pH 6.5, and its rate of association with receptor site-3 on both insect and mammalian sodium channels is 4-15-fold slower compared with LqhaIT and Lqh2. This chain is Alpha-like toxin Lqh3, found in Leiurus hebraeus (Hebrew deathstalker scorpion).